The primary structure comprises 951 residues: AP-1 complex subunit beta-1 (951 aa).

K318 bears the N6-acetyllysine mark. Y574 is subject to 3'-nitrotyrosine.

This sequence belongs to the adaptor complexes large subunit family. Adaptor protein complex 1 (AP-1) is a heterotetramer composed of two large adaptins (gamma-type subunit AP1G1 and beta-type subunit AP1B1), a medium adaptin (mu-type subunit AP1M1 or AP1M2) and a small adaptin (sigma-type subunit AP1S1 or AP1S2 or AP1S3).

The protein resides in the cytoplasmic vesicle. It localises to the clathrin-coated vesicle membrane. It is found in the golgi apparatus. Functionally, subunit of clathrin-associated adaptor protein complex 1 that plays a role in protein sorting in the late-Golgi/trans-Golgi network (TGN) and/or endosomes. The AP complexes mediate both the recruitment of clathrin to membranes and the recognition of sorting signals within the cytosolic tails of transmembrane cargo molecules. The chain is AP-1 complex subunit beta-1 (AP2B1) from Bos taurus (Bovine).